The chain runs to 77 residues: Conotoxin Lt7.1 (77 aa).

Positions 1 to 19 (MEKLTILLLVAALLMSTQG) are cleaved as a signal peptide. Residues 20–49 (LIQSGGENRPKEKIKFLSKRKTVAESWWEG) constitute a propeptide that is removed on maturation. Disulfide bonds link C51-C65, C58-C69, and C64-C74.

The protein belongs to the conotoxin O2 superfamily. In terms of tissue distribution, expressed by the venom duct.

Its subcellular location is the secreted. In Conus litteratus (Lettered cone), this protein is Conotoxin Lt7.1.